The following is a 158-amino-acid chain: Transcription elongation factor GreA (158 aa).

Belongs to the GreA/GreB family.

Functionally, necessary for efficient RNA polymerase transcription elongation past template-encoded arresting sites. The arresting sites in DNA have the property of trapping a certain fraction of elongating RNA polymerases that pass through, resulting in locked ternary complexes. Cleavage of the nascent transcript by cleavage factors such as GreA or GreB allows the resumption of elongation from the new 3'terminus. GreA releases sequences of 2 to 3 nucleotides. The protein is Transcription elongation factor GreA of Pelagibacter ubique (strain HTCC1062).